The primary structure comprises 135 residues: Ribonuclease P protein component (135 aa).

Residues 115-135 are disordered; sequence TNETVSPVSDTPLPQHERGSQ.

This sequence belongs to the RnpA family. Consists of a catalytic RNA component (M1 or rnpB) and a protein subunit.

It catalyses the reaction Endonucleolytic cleavage of RNA, removing 5'-extranucleotides from tRNA precursor.. Its function is as follows. RNaseP catalyzes the removal of the 5'-leader sequence from pre-tRNA to produce the mature 5'-terminus. It can also cleave other RNA substrates such as 4.5S RNA. The protein component plays an auxiliary but essential role in vivo by binding to the 5'-leader sequence and broadening the substrate specificity of the ribozyme. The chain is Ribonuclease P protein component from Chloroflexus aurantiacus (strain ATCC 29366 / DSM 635 / J-10-fl).